A 619-amino-acid polypeptide reads, in one-letter code: UPF0329 protein ECU08_2070 (619 aa).

Basic and acidic residues-rich tracts occupy residues 350 to 359 (EREKREESKG) and 369 to 385 (GAGE…RKEE). The disordered stretch occupies residues 350–425 (EREKREESKG…REKKMGEEHH (76 aa)). The span at 386-396 (EGVEVEEEESA) shows a compositional bias: acidic residues.

Belongs to the UPF0329 family.

The polypeptide is UPF0329 protein ECU08_2070 (Encephalitozoon cuniculi (strain GB-M1) (Microsporidian parasite)).